We begin with the raw amino-acid sequence, 570 residues long: Formate--tetrahydrofolate ligase (570 aa).

65–72 (TPFGEGKT) contacts ATP.

This sequence belongs to the formate--tetrahydrofolate ligase family.

It catalyses the reaction (6S)-5,6,7,8-tetrahydrofolate + formate + ATP = (6R)-10-formyltetrahydrofolate + ADP + phosphate. The protein operates within one-carbon metabolism; tetrahydrofolate interconversion. The polypeptide is Formate--tetrahydrofolate ligase (Shewanella halifaxensis (strain HAW-EB4)).